The primary structure comprises 873 residues: Chitin synthase F (873 aa).

Residues 1–105 (MEDAHDQSSR…KSGSGLRRYP (105 aa)) are disordered. Polar residues-rich tracts occupy residues 33–46 (SYPS…SQSL), 58–72 (ISSQ…QNPS), and 80–98 (ESEV…TKSG). An N-linked (GlcNAc...) asparagine glycan is attached at Asn-506. A run of 7 helical transmembrane segments spans residues 532–554 (LVFL…FSLA), 588–608 (IVNN…FFLA), 621–641 (ILTF…SFYL), 672–692 (GLVL…SILY), 702–722 (SWAY…YAFC), 802–822 (LVLL…NDSV), and 841–861 (VILW…LWFL).

The protein belongs to the chitin synthase family. Class III subfamily.

It is found in the cell membrane. It catalyses the reaction [(1-&gt;4)-N-acetyl-beta-D-glucosaminyl](n) + UDP-N-acetyl-alpha-D-glucosamine = [(1-&gt;4)-N-acetyl-beta-D-glucosaminyl](n+1) + UDP + H(+). Its function is as follows. Polymerizes chitin, a structural polymer of the cell wall and septum, by transferring the sugar moiety of UDP-GlcNAc to the non-reducing end of the growing chitin polymer. Plays an important role in septal growth or maintenance. Mediates colony spore formation. The protein is Chitin synthase F of Aspergillus niger (strain ATCC MYA-4892 / CBS 513.88 / FGSC A1513).